The following is a 1215-amino-acid chain: Inner capsid protein VP3 (1215 aa).

The segment at 1–81 (MPRRPRRNAK…RVDNDGDVIT (81 aa)) is disordered. Residues 21–44 (LVAPAANASVSSTVNTTTSPTLAA) are compositionally biased toward low complexity. The C2H2-type zinc-finger motif lies at 118–141 (YRCNVCNAEFPSMSAMTEHLRTSH).

It belongs to the turreted BTV-fold inner capsid family. Homodecamer; each decamer is made up of two conformers of VP2, called VP2A and VP2B. 12 homodecamers assemble to form an icosahedral capsid. Interacts with VP6.

The protein resides in the virion. Its function is as follows. Inner capsid protein that self-assembles to form an icosahedral capsid with a T=2 symmetry, which consists of 120 copies of VP2, with channels at each of its five-fold vertices. This capsid constitutes the innermost concentric layer of the viral mature particle. In Ctenopharyngodon idella (Grass carp), this protein is Inner capsid protein VP3 (S3).